A 467-amino-acid chain; its full sequence is Glutamate--tRNA ligase (467 aa).

A 'HIGH' region motif is present at residues 10–20 (PSPTGHLHIGG). The Zn(2+) site is built by Cys99, Cys101, Cys126, and Glu128. Residues 236–240 (RLSKR) carry the 'KMSKS' region motif. ATP is bound at residue Lys239.

Belongs to the class-I aminoacyl-tRNA synthetase family. Glutamate--tRNA ligase type 1 subfamily. As to quaternary structure, monomer. It depends on Zn(2+) as a cofactor.

Its subcellular location is the cytoplasm. The catalysed reaction is tRNA(Glu) + L-glutamate + ATP = L-glutamyl-tRNA(Glu) + AMP + diphosphate. Functionally, catalyzes the attachment of glutamate to tRNA(Glu) in a two-step reaction: glutamate is first activated by ATP to form Glu-AMP and then transferred to the acceptor end of tRNA(Glu). In Desulfosudis oleivorans (strain DSM 6200 / JCM 39069 / Hxd3) (Desulfococcus oleovorans), this protein is Glutamate--tRNA ligase.